A 234-amino-acid chain; its full sequence is Fibroblast growth factor-binding protein 1 (234 aa).

An N-terminal signal peptide occupies residues 1–23 (MRTHGLTLLSLLLLAVPMLLVEA). The segment at 25–59 (KEGRNRRGSKASADESLALGKPGKEPRSQPTNYPI) is disordered. 3 disulfide bridges follow: cysteine 71-cysteine 88, cysteine 97-cysteine 130, and cysteine 106-cysteine 142. The N-linked (GlcNAc...) asparagine glycan is linked to asparagine 155. Residues 169–200 (MEPSPMDTVEVTTSSSPEKTQTMATKDPQCEE) form a disordered region. Serine 172 carries an O-linked (GalNAc...) serine glycan. Residues 178 to 192 (EVTTSSSPEKTQTMA) show a composition bias toward polar residues. A sufficient for interaction with FGF2 and FGF2-induced effects region spans residues 194-234 (KDPQCEEEDLKNQRKAALEYCGETWGSLCNFFLSMVQGSSC). 2 disulfides stabilise this stretch: cysteine 198–cysteine 234 and cysteine 214–cysteine 222.

The protein belongs to the fibroblast growth factor-binding protein family. Found in a complex with FGFBP1, FGF1 and FGF2. Interacts with FGF1, FGF7, FGF10, FGF22 and HSPG2. Interacts with FGF2.

The protein resides in the secreted. It localises to the extracellular space. It is found in the cell membrane. In terms of biological role, acts as a carrier protein that release fibroblast-binding factors (FGFs) from the extracellular matrix (EM) storage and thus enhance the mitogenic activity of FGFs. Enhances FGF2 signaling during tissue repair, angiogenesis and in tumor growth. In Bos taurus (Bovine), this protein is Fibroblast growth factor-binding protein 1 (FGFBP1).